The sequence spans 166 residues: 2-C-methyl-D-erythritol 2,4-cyclodiphosphate synthase (166 aa).

A divalent metal cation-binding residues include Asp11 and His13. 4-CDP-2-C-methyl-D-erythritol 2-phosphate is bound by residues 11–13 (DVH) and 40–41 (HS). An a divalent metal cation-binding site is contributed by His48. 4-CDP-2-C-methyl-D-erythritol 2-phosphate contacts are provided by residues 62–64 (DLG), 135–138 (TTSD), Phe142, and Arg145.

It belongs to the IspF family. As to quaternary structure, homotrimer. A divalent metal cation is required as a cofactor.

It carries out the reaction 4-CDP-2-C-methyl-D-erythritol 2-phosphate = 2-C-methyl-D-erythritol 2,4-cyclic diphosphate + CMP. Its pathway is isoprenoid biosynthesis; isopentenyl diphosphate biosynthesis via DXP pathway; isopentenyl diphosphate from 1-deoxy-D-xylulose 5-phosphate: step 4/6. In terms of biological role, involved in the biosynthesis of isopentenyl diphosphate (IPP) and dimethylallyl diphosphate (DMAPP), two major building blocks of isoprenoid compounds. Catalyzes the conversion of 4-diphosphocytidyl-2-C-methyl-D-erythritol 2-phosphate (CDP-ME2P) to 2-C-methyl-D-erythritol 2,4-cyclodiphosphate (ME-CPP) with a corresponding release of cytidine 5-monophosphate (CMP). The chain is 2-C-methyl-D-erythritol 2,4-cyclodiphosphate synthase from Pseudarthrobacter chlorophenolicus (strain ATCC 700700 / DSM 12829 / CIP 107037 / JCM 12360 / KCTC 9906 / NCIMB 13794 / A6) (Arthrobacter chlorophenolicus).